The primary structure comprises 204 residues: Ribosome maturation factor RimP (204 aa).

Belongs to the RimP family.

The protein resides in the cytoplasm. In terms of biological role, required for maturation of 30S ribosomal subunits. In Allorhizobium ampelinum (strain ATCC BAA-846 / DSM 112012 / S4) (Agrobacterium vitis (strain S4)), this protein is Ribosome maturation factor RimP.